Reading from the N-terminus, the 447-residue chain is GTPase Der (447 aa).

2 EngA-type G domains span residues 3-167 and 180-353; these read PVIA…HLAD and IRLA…ASAN. Residues 9–16, 56–60, 119–122, 186–193, 233–237, and 298–301 contribute to the GTP site; these read GRPNVGKS, DTGGF, NKAE, DTAGL, and NKWD. One can recognise a KH-like domain in the interval 354 to 438; sequence RKMSTPVLTR…PMRIQMKSSH (85 aa).

This sequence belongs to the TRAFAC class TrmE-Era-EngA-EngB-Septin-like GTPase superfamily. EngA (Der) GTPase family. In terms of assembly, associates with the 50S ribosomal subunit.

In terms of biological role, GTPase that plays an essential role in the late steps of ribosome biogenesis. This Polaromonas sp. (strain JS666 / ATCC BAA-500) protein is GTPase Der.